The sequence spans 122 residues: Flagellar protein FliT (122 aa).

Positions 1–50 (MTSTVEFINRWQRIALLSQSLLELAQRGEWDLLLQQEVSYLQSIETVMEK) are required for homodimerization. The fliD binding stretch occupies residues 60–98 (IQDMVAGYIKQTLDNEQLLKGLLQQRLDELSSLIGQSTR).

This sequence belongs to the FliT family. As to quaternary structure, homodimer. Interacts with FliD and FlhC.

It localises to the cytoplasm. It is found in the cytosol. Functionally, dual-function protein that regulates the transcription of class 2 flagellar operons and that also acts as an export chaperone for the filament-capping protein FliD. As a transcriptional regulator, acts as an anti-FlhDC factor; it directly binds FlhC, thus inhibiting the binding of the FlhC/FlhD complex to class 2 promoters, resulting in decreased expression of class 2 flagellar operons. As a chaperone, effects FliD transition to the membrane by preventing its premature polymerization, and by directing it to the export apparatus. The sequence is that of Flagellar protein FliT from Salmonella schwarzengrund (strain CVM19633).